Here is a 421-residue protein sequence, read N- to C-terminus: D-amino acid dehydrogenase (421 aa).

3–17 is an FAD binding site; the sequence is VTILGAGVIGVTSAY.

The protein belongs to the DadA oxidoreductase family. Requires FAD as cofactor.

The enzyme catalyses a D-alpha-amino acid + A + H2O = a 2-oxocarboxylate + AH2 + NH4(+). The protein operates within amino-acid degradation; D-alanine degradation; NH(3) and pyruvate from D-alanine: step 1/1. Its function is as follows. Oxidative deamination of D-amino acids. The sequence is that of D-amino acid dehydrogenase from Allorhizobium ampelinum (strain ATCC BAA-846 / DSM 112012 / S4) (Agrobacterium vitis (strain S4)).